Here is a 202-residue protein sequence, read N- to C-terminus: Imidazole glycerol phosphate synthase subunit HisH 2 (202 aa).

One can recognise a Glutamine amidotransferase type-1 domain in the interval 1–202 (MIAIIDYGMG…KLMENFIKQA (202 aa)). Cys-80 serves as the catalytic Nucleophile. Catalysis depends on residues His-183 and Glu-185.

As to quaternary structure, heterodimer of HisH and HisF.

The protein resides in the cytoplasm. It catalyses the reaction 5-[(5-phospho-1-deoxy-D-ribulos-1-ylimino)methylamino]-1-(5-phospho-beta-D-ribosyl)imidazole-4-carboxamide + L-glutamine = D-erythro-1-(imidazol-4-yl)glycerol 3-phosphate + 5-amino-1-(5-phospho-beta-D-ribosyl)imidazole-4-carboxamide + L-glutamate + H(+). It carries out the reaction L-glutamine + H2O = L-glutamate + NH4(+). It functions in the pathway amino-acid biosynthesis; L-histidine biosynthesis; L-histidine from 5-phospho-alpha-D-ribose 1-diphosphate: step 5/9. Its function is as follows. IGPS catalyzes the conversion of PRFAR and glutamine to IGP, AICAR and glutamate. The HisH subunit provides the glutamine amidotransferase activity that produces the ammonia necessary to HisF for the synthesis of IGP and AICAR. In Methanococcus maripaludis (strain DSM 14266 / JCM 13030 / NBRC 101832 / S2 / LL), this protein is Imidazole glycerol phosphate synthase subunit HisH 2 (hisH2).